We begin with the raw amino-acid sequence, 175 residues long: Methylmalonyl-CoA epimerase, mitochondrial (175 aa).

A mitochondrion-targeting transit peptide spans 1 to 35; it reads MARVLKVAAASAAGLFPRLRTPVSTVRTSASLSSH. Positions 46–175 constitute a VOC domain; the sequence is RLNHVAVAVP…GGVLVELEQA (130 aa). His-49 contacts Co(2+). Lys-113 is subject to N6-succinyllysine. His-121 lines the Co(2+) pocket. Position 149 is an N6-acetyllysine; alternate (Lys-149). Lys-149 is subject to N6-succinyllysine; alternate. Glu-171 contacts Co(2+).

This sequence belongs to the methylmalonyl-CoA epimerase family.

It localises to the mitochondrion. It carries out the reaction (R)-methylmalonyl-CoA = (S)-methylmalonyl-CoA. In terms of biological role, methylmalonyl-CoA epimerase involved in propionyl-CoA metabolism. In Bos taurus (Bovine), this protein is Methylmalonyl-CoA epimerase, mitochondrial (MCEE).